Here is a 208-residue protein sequence, read N- to C-terminus: 3-demethoxyubiquinol 3-hydroxylase (208 aa).

Residues Glu-57, Glu-87, His-90, Glu-139, Glu-171, and His-174 each contribute to the Fe cation site.

The protein belongs to the COQ7 family. Fe cation is required as a cofactor.

The protein localises to the cell membrane. It catalyses the reaction a 5-methoxy-2-methyl-3-(all-trans-polyprenyl)benzene-1,4-diol + AH2 + O2 = a 3-demethylubiquinol + A + H2O. Its pathway is cofactor biosynthesis; ubiquinone biosynthesis. In terms of biological role, catalyzes the hydroxylation of 2-nonaprenyl-3-methyl-6-methoxy-1,4-benzoquinol during ubiquinone biosynthesis. The chain is 3-demethoxyubiquinol 3-hydroxylase from Burkholderia cenocepacia (strain ATCC BAA-245 / DSM 16553 / LMG 16656 / NCTC 13227 / J2315 / CF5610) (Burkholderia cepacia (strain J2315)).